Here is a 236-residue protein sequence, read N- to C-terminus: CO-responsive transcriptional regulator RcoM (236 aa).

The 64-residue stretch at 1 to 64 (MDDFAYNLRR…PLRPKVAVLL (64 aa)) folds into the PAS domain. H52 serves as a coordination point for heme. The 106-residue stretch at 131 to 236 (VPLGLGETTE…VTRLRGLLAI (106 aa)) folds into the HTH LytTR-type domain.

Heme is required as a cofactor.

In terms of biological role, activates the expression of the CowN protein in response to carbon monoxide (CO). Is required to sustain N(2)-dependent growth in the presence of low levels of carbon monoxide (CO). The protein is CO-responsive transcriptional regulator RcoM (rcoM) of Rhodospirillum rubrum (strain ATCC 11170 / ATH 1.1.1 / DSM 467 / LMG 4362 / NCIMB 8255 / S1).